Consider the following 220-residue polypeptide: CRISPR system Cms endoribonuclease Csm3 (220 aa).

This sequence belongs to the CRISPR-associated Csm3 family. In terms of assembly, part of the Csm effector complex that includes at least Cas10(1), Csm2(3), Csm3(5), Csm4(1), Csm5(1) and mature crRNA. The Csm complex is elongated and slightly twisted with a maximal length of 215 Angstroms and a diameter of 75-80 Angstroms. It has been modeled to have a central protein filamant of Csm3 subunits along which the dsRNA helix of paired crRNA and target RNA binds. The filament is capped at one end by Cas10 and Csm4 and at the other end by Csm5; ssDNA is thought to bind to the N-terminal HD domain of Cas10. Csm with a precursor crRNA does not include Csm5, while Cas6, the enzyme probably involved in pre-crRNA processing, is found associated with a subset of the Csm complex. A metal cation is required as a cofactor.

With respect to regulation, target ssRNase is inhibited by EDTA. CRISPR (clustered regularly interspaced short palindromic repeat) is an adaptive immune system that provides protection against mobile genetic elements (viruses, transposable elements and conjugative plasmids). CRISPR clusters contain spacers, sequences complementary to antecedent mobile elements, and target invading nucleic acids. CRISPR clusters are transcribed and processed into CRISPR RNA (crRNA). The type III-A Csm effector complex binds crRNA and acts as a crRNA-guided RNase, DNase and cyclic oligoadenylate synthase; binding of target RNA cognate to the crRNA is required for all activities. In a heterologous host this Csm effector complex restricts ssRNA phage MS2, suggesting it may target RNA viruses in vivo. Functionally, csm functions as a non-specific ssDNase. Base-pairing between crRNA and target RNA to form a ternary Csm complex activates a ssDNase activity; target RNA cleavage suppresses the ssDNase, a temporal control that prevents uncontrolled DNA degradation. Viral RNA transcripts probably tether the Csm complex to the viral genome, recruiting Cas10 ssDNA activity which is able to degrade DNA in the transcription bubble, spatially controlling the DNase activity. Its function is as follows. This subunit has the target ssRNA endonuclease activity; it cleaves multiple sites in the target RNA at 6 nucleotide intervals. The number of cleavage sites in the target RNA correlates with the number of Csm3 subunits in the Csm effector complex. In the Csm complex target RNA and ssDNA are cleaved simultaneously, although RNase activity (of Csm3) is much faster. RNA cleavage by Csm3 is not required for ssDNase activity as Csm complex with inactive Csm3 still has ssDNase activity; however as the cleaved target RNA products dissociate away ssDNase activity decreases. The sequence is that of CRISPR system Cms endoribonuclease Csm3 from Streptococcus thermophilus.